The following is a 432-amino-acid chain: Phosphoprotein associated with glycosphingolipid-enriched microdomains 1 (432 aa).

Over 1–16 the chain is Extracellular; the sequence is MGPAGSLLGSGQMQIT. A helical; Signal-anchor for type III membrane protein membrane pass occupies residues 17 to 37; the sequence is LWGSLAAVAIFFVITFLIFLC. S-palmitoyl cysteine attachment occurs at residues cysteine 37 and cysteine 40. Residues 38–432 lie on the Cytoplasmic side of the membrane; that stretch reads SSCDREKKPR…LQQGRDITRL (395 aa). Serine 50 and serine 61 each carry phosphoserine. Position 105 is a phosphotyrosine; by LYN (tyrosine 105). Over residues 110–122 the composition is skewed to polar residues; the sequence is TSASDLLDSQDST. The tract at residues 110–137 is disordered; it reads TSASDLLDSQDSTGKPKCHQSRELPRIP. Tyrosine 163, tyrosine 181, and tyrosine 227 each carry phosphotyrosine. Disordered stretches follow at residues 197 to 230 and 244 to 432; these read EKGH…YASV and SILG…ITRL. Positions 220-230 are enriched in basic and acidic residues; that stretch reads GKAEFAEYASV. Position 229 is a phosphoserine (serine 229). The segment covering 316 to 356 has biased composition (polar residues); that stretch reads MYSSVNKPGQLVNKSGQSLTVPESTYTSIQGDPQRSPSSCN. Tyrosine 317 is modified (phosphotyrosine; by FYN and LYN). The segment at 317–320 is interaction with CSK; that stretch reads YSSV. Serine 354 bears the Phosphoserine mark. Tyrosine 359 is subject to Phosphotyrosine. Serine 380 is subject to Phosphoserine. A phosphotyrosine mark is found at tyrosine 387 and tyrosine 417. The interaction with NHERF1 stretch occupies residues 430 to 432; that stretch reads TRL.

Interacts with FYN. When phosphorylated, interacts with CSK. Interacts with NHERF1/EBP50. In resting T-cells, part of a PAG1-NHERF1-MSN complex which is disrupted upon TCR activation. Interacts with LYN on plasma membrane lipid rafts. Identified in a complex with LYN and STAT3. Palmitoylated. In terms of processing, phosphorylated by FYN on Tyr-317 in resting T-cells; which promotes interaction with CSK. Dephosphorylated by PTPRC/CD45 upon TCR activation; which leads to CSK dissociation. May also be dephosphorylated by PTPN11. Hyperphosphorylated in mast cells upon FCER1 activation. Phosphorylated by LYN. In terms of tissue distribution, ubiquitously expressed. Present in germinal center B-cells, plasma cells, T-cells, monocytes and platelets (at protein level).

It is found in the cell membrane. Functionally, negatively regulates TCR (T-cell antigen receptor)-mediated signaling in T-cells and FCER1 (high affinity immunoglobulin epsilon receptor)-mediated signaling in mast cells. Promotes CSK activation and recruitment to lipid rafts, which results in LCK inhibition. Inhibits immunological synapse formation by preventing dynamic arrangement of lipid raft proteins. May be involved in cell adhesion signaling. The chain is Phosphoprotein associated with glycosphingolipid-enriched microdomains 1 (PAG1) from Homo sapiens (Human).